We begin with the raw amino-acid sequence, 131 residues long: Holo-[acyl-carrier-protein] synthase (131 aa).

D8 and E63 together coordinate Mg(2+).

The protein belongs to the P-Pant transferase superfamily. AcpS family. It depends on Mg(2+) as a cofactor.

It localises to the cytoplasm. It carries out the reaction apo-[ACP] + CoA = holo-[ACP] + adenosine 3',5'-bisphosphate + H(+). Transfers the 4'-phosphopantetheine moiety from coenzyme A to a Ser of acyl-carrier-protein. The protein is Holo-[acyl-carrier-protein] synthase of Shewanella halifaxensis (strain HAW-EB4).